Reading from the N-terminus, the 444-residue chain is tRNA modification GTPase MnmE (444 aa).

The (6S)-5-formyl-5,6,7,8-tetrahydrofolate site is built by Arg21, Glu79, and Lys118. The TrmE-type G domain occupies 215–365 (GLNVVIVGKP…LVNEIKTNLK (151 aa)). A K(+)-binding site is contributed by Asn225. Residues 225–230 (NVGKSS), 244–250 (SDIKGTT), and 269–272 (DTAG) each bind GTP. Ser229 lines the Mg(2+) pocket. Ser244, Ile246, and Thr249 together coordinate K(+). Thr250 lines the Mg(2+) pocket. Position 444 (Lys444) interacts with (6S)-5-formyl-5,6,7,8-tetrahydrofolate.

Belongs to the TRAFAC class TrmE-Era-EngA-EngB-Septin-like GTPase superfamily. TrmE GTPase family. In terms of assembly, homodimer. Heterotetramer of two MnmE and two MnmG subunits. Requires K(+) as cofactor.

The protein resides in the cytoplasm. Its function is as follows. Exhibits a very high intrinsic GTPase hydrolysis rate. Involved in the addition of a carboxymethylaminomethyl (cmnm) group at the wobble position (U34) of certain tRNAs, forming tRNA-cmnm(5)s(2)U34. This is tRNA modification GTPase MnmE from Malacoplasma penetrans (strain HF-2) (Mycoplasma penetrans).